The chain runs to 143 residues: Peptide methionine sulfoxide reductase MsrB (143 aa).

The MsrB domain maps to 16–139; sequence DAELRRRLTP…NSAALNFEAK (124 aa). Positions 55, 58, 104, and 107 each coordinate Zn(2+). The Nucleophile role is filled by Cys-128.

It belongs to the MsrB Met sulfoxide reductase family. The cofactor is Zn(2+).

The catalysed reaction is L-methionyl-[protein] + [thioredoxin]-disulfide + H2O = L-methionyl-(R)-S-oxide-[protein] + [thioredoxin]-dithiol. In Burkholderia pseudomallei (strain 1710b), this protein is Peptide methionine sulfoxide reductase MsrB.